We begin with the raw amino-acid sequence, 430 residues long: Glutamyl-tRNA reductase (430 aa).

Substrate-binding positions include 50–53 (TCNR), Ser108, 113–115 (EPQ), and Gln119. Cys51 functions as the Nucleophile in the catalytic mechanism. 188 to 193 (GAGEMA) lines the NADP(+) pocket.

It belongs to the glutamyl-tRNA reductase family. Homodimer.

It catalyses the reaction (S)-4-amino-5-oxopentanoate + tRNA(Glu) + NADP(+) = L-glutamyl-tRNA(Glu) + NADPH + H(+). It functions in the pathway porphyrin-containing compound metabolism; protoporphyrin-IX biosynthesis; 5-aminolevulinate from L-glutamyl-tRNA(Glu): step 1/2. Functionally, catalyzes the NADPH-dependent reduction of glutamyl-tRNA(Glu) to glutamate 1-semialdehyde (GSA). This Lawsonia intracellularis (strain PHE/MN1-00) protein is Glutamyl-tRNA reductase.